Here is a 415-residue protein sequence, read N- to C-terminus: Glycerate 2-kinase (415 aa).

Lys57 serves as a coordination point for substrate.

The protein belongs to the glycerate kinase type-1 family. Homodimer. It depends on Mg(2+) as a cofactor. Requires Ni(2+) as cofactor. Mn(2+) serves as cofactor. The cofactor is Co(2+).

It carries out the reaction (R)-glycerate + ATP = (2R)-2-phosphoglycerate + ADP + H(+). In terms of biological role, catalyzes the ATP-dependent phosphorylation of D-glycerate to 2-phosphoglycerate. It can also partially utilize GTP, CTP or UTP as phosphate donor. The protein is Glycerate 2-kinase (gck) of Picrophilus torridus (strain ATCC 700027 / DSM 9790 / JCM 10055 / NBRC 100828 / KAW 2/3).